A 342-amino-acid chain; its full sequence is MSRLTLALDVMGGDIGPRITIPASLQALEKDPMLSLLLFGDSRQIQSELDKVSDKISSDVGERLAIRHASHVIDNNQSVTEALRHSKGTSMRLAIESVQRGEAQGCVSGGNTGALMGLAKVILQPLKGIQRPALVSILPTIDGNHSVMLDLGANIDCNAENLYQFALMGAIFAENQLNLVFPRVALLNIGVEAIKGYKSIREASEMIKQNTALNYIGFIEGNYLLNGIADVIVSDGFAGNVALKTLEGAAQNVIGLLKGHSRNNVLKPLFGRLMKILFRDSYQRLRSINPEQYNGASLIGLTSVVVKSHGGAGINAFSNAVKDAALQVRQQIPQKILDGLNK.

This sequence belongs to the PlsX family. Homodimer. Probably interacts with PlsY.

It localises to the cytoplasm. The enzyme catalyses a fatty acyl-[ACP] + phosphate = an acyl phosphate + holo-[ACP]. It participates in lipid metabolism; phospholipid metabolism. Its function is as follows. Catalyzes the reversible formation of acyl-phosphate (acyl-PO(4)) from acyl-[acyl-carrier-protein] (acyl-ACP). This enzyme utilizes acyl-ACP as fatty acyl donor, but not acyl-CoA. In Actinobacillus succinogenes (strain ATCC 55618 / DSM 22257 / CCUG 43843 / 130Z), this protein is Phosphate acyltransferase.